We begin with the raw amino-acid sequence, 99 residues long: Complement inhibitor RaCI7 (99 aa).

Positions Met1 to Ser24 are cleaved as a signal peptide. 3 disulfides stabilise this stretch: Cys37/Cys61, Cys42/Cys63, and Cys57/Cys78.

The protein belongs to the RaCI family. In terms of tissue distribution, expressed in salivary glands.

It is found in the secreted. In terms of biological role, complement inhibitor. Prevents complement-mediated C5 activation by binding to C5. Binds C5 at a different binding site than the other tick complement inhibitors OmCI and CirpT1, and the drug eculizumab. This is Complement inhibitor RaCI7 from Dermacentor andersoni (Rocky mountain wood tick).